Consider the following 156-residue polypeptide: Snaclec A1 (156 aa).

A signal peptide spans 1-23 (MGRSISVSFGLLVVFLSLSGTGA). Cystine bridges form between Cys27/Cys38, Cys55/Cys154, and Cys129/Cys146. The 122-residue stretch at 34–155 (HEGHCYKVFN…CGQPYRFTCE (122 aa)) folds into the C-type lectin domain.

It belongs to the snaclec family. As to quaternary structure, heterodimer; disulfide-linked. As to expression, expressed by the venom gland.

The protein resides in the secreted. In terms of biological role, interferes with one step of hemostasis (modulation of platelet aggregation, or coagulation cascade, for example). The sequence is that of Snaclec A1 from Macrovipera lebetinus (Levantine viper).